The following is a 319-amino-acid chain: Carbonic anhydrase 6 (319 aa).

Positions Met1–Ala14 are cleaved as a signal peptide. The 258-residue stretch at His16 to Phe273 folds into the Alpha-carbonic anhydrase domain. The cysteines at positions 37 and 219 are disulfide-linked. Asn62 is a glycosylation site (N-linked (GlcNAc...) asparagine). His80 acts as the Proton donor/acceptor in catalysis. Zn(2+)-binding residues include His106, His108, and His133. Thr215–Thr216 contributes to the substrate binding site. An N-linked (GlcNAc...) asparagine glycan is attached at Asn251.

The protein belongs to the alpha-carbonic anhydrase family. Zn(2+) serves as cofactor. As to expression, major constituent of saliva.

Its subcellular location is the secreted. It catalyses the reaction hydrogencarbonate + H(+) = CO2 + H2O. Functionally, reversible hydration of carbon dioxide. Its role in saliva is unknown. In Bos taurus (Bovine), this protein is Carbonic anhydrase 6 (CA6).